The primary structure comprises 216 residues: Thymidylate kinase (216 aa).

10–17 (GIDGCGKT) provides a ligand contact to ATP.

Belongs to the thymidylate kinase family.

It catalyses the reaction dTMP + ATP = dTDP + ADP. Phosphorylation of dTMP to form dTDP in both de novo and salvage pathways of dTTP synthesis. The polypeptide is Thymidylate kinase (Prochlorococcus marinus (strain MIT 9303)).